The following is a 795-amino-acid chain: Phospholipase A-2-activating protein (795 aa).

WD repeat units lie at residues His17–Thr56, Gly63–Ile107, Gly110–Gln148, Gly149–Ser188, His190–Tyr227, Gly229–Arg268, and Pro270–Ala307. The residue at position 50 (Ser50) is a Phosphoserine. Positions Gln366–Pro465 constitute a PFU domain. Lys529 carries the N6-acetyllysine modification. A PUL domain is found at Ile533–Leu794. ARM repeat units follow at residues Ala546–Ser588, Glu589–Ser620, Ile621–Gly669, Gln670–Lys715, Asp716–Asp755, and Asp756–Leu795.

The protein belongs to the WD repeat PLAP family. In terms of assembly, interacts with ubiquitin. Interacts with UBXN6, VCP and YOD1; may form a complex involved in macroautophagy.

It is found in the nucleus. The protein localises to the cytoplasm. The protein resides in the synapse. In terms of biological role, plays a role in protein ubiquitination, sorting and degradation through its association with VCP. Involved in ubiquitin-mediated membrane proteins trafficking to late endosomes in an ESCRT-dependent manner, and hence plays a role in synaptic vesicle recycling. May play a role in macroautophagy, regulating for instance the clearance of damaged lysosomes. Plays a role in cerebellar Purkinje cell development. Positively regulates cytosolic and calcium-independent phospholipase A2 activities in a tumor necrosis factor alpha (TNF-alpha)- or lipopolysaccharide (LPS)-dependent manner, and hence prostaglandin E2 biosynthesis. The sequence is that of Phospholipase A-2-activating protein (PLAA) from Homo sapiens (Human).